The sequence spans 424 residues: Phosphomethylpyrimidine synthase (424 aa).

Residues Met94, Tyr123, His162, 184 to 186 (SRG), 225 to 228 (NGMR), and Glu264 each bind substrate. His268 contributes to the Zn(2+) binding site. Substrate is bound at residue Tyr291. His332 provides a ligand contact to Zn(2+). 3 residues coordinate [4Fe-4S] cluster: Cys406, Cys409, and Cys413.

It belongs to the ThiC family. [4Fe-4S] cluster is required as a cofactor.

The catalysed reaction is 5-amino-1-(5-phospho-beta-D-ribosyl)imidazole + S-adenosyl-L-methionine = 4-amino-2-methyl-5-(phosphooxymethyl)pyrimidine + CO + 5'-deoxyadenosine + formate + L-methionine + 3 H(+). It participates in cofactor biosynthesis; thiamine diphosphate biosynthesis. Catalyzes the synthesis of the hydroxymethylpyrimidine phosphate (HMP-P) moiety of thiamine from aminoimidazole ribotide (AIR) in a radical S-adenosyl-L-methionine (SAM)-dependent reaction. In Methanoculleus marisnigri (strain ATCC 35101 / DSM 1498 / JR1), this protein is Phosphomethylpyrimidine synthase.